A 345-amino-acid chain; its full sequence is Adenylosuccinate synthetase (345 aa).

Residues 18 to 24 (GDEGKGK) and 48 to 50 (GHT) contribute to the GTP site. Asp19 acts as the Proton acceptor in catalysis. Positions 19 and 48 each coordinate Mg(2+). Residues 19-22 (DEGK), 46-49 (NAGH), Thr133, Arg147, Gln185, Thr200, and Arg262 each bind IMP. His49 acts as the Proton donor in catalysis. 258–264 (TVTGRRR) is a substrate binding site. Residues Arg264, 290–292 (GLD), and 330–332 (STG) contribute to the GTP site.

Belongs to the adenylosuccinate synthetase family. Homodimer. Mg(2+) serves as cofactor.

The protein localises to the cytoplasm. The enzyme catalyses IMP + L-aspartate + GTP = N(6)-(1,2-dicarboxyethyl)-AMP + GDP + phosphate + 2 H(+). The protein operates within purine metabolism; AMP biosynthesis via de novo pathway; AMP from IMP: step 1/2. Functionally, plays an important role in the de novo pathway of purine nucleotide biosynthesis. Catalyzes the first committed step in the biosynthesis of AMP from IMP. In Methanocaldococcus jannaschii (strain ATCC 43067 / DSM 2661 / JAL-1 / JCM 10045 / NBRC 100440) (Methanococcus jannaschii), this protein is Adenylosuccinate synthetase.